We begin with the raw amino-acid sequence, 312 residues long: uncharacterized protein (312 aa).

A signal peptide spans 1 to 19 (MFSKYLVTASSLFVALTSA).

This is an uncharacterized protein from Saccharomyces cerevisiae (strain ATCC 204508 / S288c) (Baker's yeast).